A 353-amino-acid polypeptide reads, in one-letter code: ATPase GET3 (353 aa).

26–33 (KGGVGKTT) is an ATP binding site. Residue D57 is part of the active site. Residues E244 and N271 each contribute to the ATP site. The Zn(2+) site is built by C284 and C287.

Belongs to the arsA ATPase family. In terms of assembly, homodimer. Component of the Golgi to ER traffic (GET) complex, which is composed of GET1, GET2 and GET3. Within the complex, GET1 and GET2 form a heterotetramer which is stabilized by phosphatidylinositol binding and which binds to the GET3 homodimer. Interacts with the chloride channel protein GEF1.

It is found in the cytoplasm. The protein resides in the endoplasmic reticulum. It localises to the golgi apparatus. Its function is as follows. ATPase required for the post-translational delivery of tail-anchored (TA) proteins to the endoplasmic reticulum. Recognizes and selectively binds the transmembrane domain of TA proteins in the cytosol. This complex then targets to the endoplasmic reticulum by membrane-bound receptors GET1 and GET2, where the tail-anchored protein is released for insertion. This process is regulated by ATP binding and hydrolysis. ATP binding drives the homodimer towards the closed dimer state, facilitating recognition of newly synthesized TA membrane proteins. ATP hydrolysis is required for insertion. Subsequently, the homodimer reverts towards the open dimer state, lowering its affinity for the GET1-GET2 receptor, and returning it to the cytosol to initiate a new round of targeting. Cooperates with the HDEL receptor ERD2 to mediate the ATP-dependent retrieval of resident ER proteins that contain a C-terminal H-D-E-L retention signal from the Golgi to the ER. Involved in low-level resistance to the oxyanions arsenite and arsenate, and in heat tolerance. This Zygosaccharomyces rouxii (strain ATCC 2623 / CBS 732 / NBRC 1130 / NCYC 568 / NRRL Y-229) protein is ATPase GET3.